A 360-amino-acid chain; its full sequence is Decorin (360 aa).

Positions methionine 1 to alanine 16 are cleaved as a signal peptide. The propeptide occupies glycine 17–glutamate 30. O-linked (Xyl...) (glycosaminoglycan) serine glycosylation is present at serine 34. Intrachain disulfides connect cysteine 55–cysteine 61 and cysteine 59–cysteine 68. LRR repeat units lie at residues aspartate 74–isoleucine 94, threonine 95–isoleucine 118, serine 119–leucine 142, lysine 143–isoleucine 163, threonine 164–leucine 187, lysine 188–isoleucine 213, threonine 214–isoleucine 234, threonine 235–isoleucine 258, serine 259–leucine 282, isoleucine 283–isoleucine 305, serine 306–valine 335, and glutamine 336–lysine 360. N-linked (GlcNAc...) asparagine glycosylation occurs at asparagine 212. Asparagine 263 and asparagine 304 each carry an N-linked (GlcNAc...) asparagine glycan. The cysteines at positions 314 and 347 are disulfide-linked.

This sequence belongs to the small leucine-rich proteoglycan (SLRP) family. SLRP class I subfamily. In terms of assembly, binds to type I and type II collagen, fibronectin and TGF-beta. Forms a ternary complex with MFAP2 and ELN. Interacts with DPT. In terms of processing, the attached glycosaminoglycan chain can be either chondroitin sulfate or dermatan sulfate depending upon the tissue of origin.

Its subcellular location is the secreted. The protein resides in the extracellular space. The protein localises to the extracellular matrix. Its function is as follows. May affect the rate of fibrils formation. In Canis lupus familiaris (Dog), this protein is Decorin (DCN).